Consider the following 288-residue polypeptide: Energy-coupling factor transporter ATP-binding protein EcfA3 (288 aa).

In terms of domain architecture, ABC transporter spans 3-245 (INFRNVSFSY…ESYLRKEKLR (243 aa)). 40-47 (GHTGSGKS) lines the ATP pocket.

This sequence belongs to the ABC transporter superfamily. Energy-coupling factor EcfA family. In terms of assembly, forms a stable energy-coupling factor (ECF) transporter complex composed of 2 membrane-embedded substrate-binding proteins (S component), 2 ATP-binding proteins (A component) and 2 transmembrane proteins (T component).

It localises to the cell membrane. Its function is as follows. ATP-binding (A) component of a common energy-coupling factor (ECF) ABC-transporter complex. Unlike classic ABC transporters this ECF transporter provides the energy necessary to transport a number of different substrates. This Oenococcus oeni (strain ATCC BAA-331 / PSU-1) protein is Energy-coupling factor transporter ATP-binding protein EcfA3.